A 308-amino-acid chain; its full sequence is Staphylococcal superantigen-like 4 (308 aa).

A signal peptide spans 1-30; it reads MKITTIAKTSLALGLLTTGVITTTTQAANA. A disordered region spans residues 28 to 117; that stretch reads ANATTPSSTK…TTKQVPTEIN (90 aa). Polar residues-rich tracts occupy residues 33–47 and 55–76; these read PSST…TPPS and SKPN…TANA. Low complexity predominate over residues 77–93; sequence TTPPSTKVTTPPSTNTP. The segment covering 94 to 114 has biased composition (polar residues); sequence QPMQSTKSDTPQSPTTKQVPT. The segment at 180 to 278 is sialyl Lewis X-binding; it reads VDVFVVLEEN…VIKMKNGGKY (99 aa).

The protein belongs to the staphylococcal/streptococcal toxin family.

The protein localises to the secreted. Functionally, secreted protein that plays a role in immune innate response inhibition by interfering with host TLR2-mediated pathway. The polypeptide is Staphylococcal superantigen-like 4 (Staphylococcus aureus (strain Newman)).